A 379-amino-acid polypeptide reads, in one-letter code: Cytochrome b (379 aa).

The next 4 membrane-spanning stretches (helical) occupy residues 33–53 (FGSLLGMCLMIQILTGLFLAM), 77–98 (WLIRYLHANGASMFFICLFIHV), 113–133 (WNIGIILFFTTMATAFVGYVL), and 178–198 (FFAFHFILPFIITAFVLVHLL). Heme b-binding residues include histidine 83 and histidine 97. Heme b is bound by residues histidine 182 and histidine 196. Histidine 201 serves as a coordination point for a ubiquinone. A run of 4 helical transmembrane segments spans residues 226–246 (IKDLLGILFLLMALMILALFF), 288–308 (LGGVLALLLSILILMAFPLLN), 320–340 (ITQIIYWILIANLLVLTWIGG), and 347–367 (FTMIGQIASITYFTIILILMP).

It belongs to the cytochrome b family. As to quaternary structure, the cytochrome bc1 complex contains 11 subunits: 3 respiratory subunits (MT-CYB, CYC1 and UQCRFS1), 2 core proteins (UQCRC1 and UQCRC2) and 6 low-molecular weight proteins (UQCRH/QCR6, UQCRB/QCR7, UQCRQ/QCR8, UQCR10/QCR9, UQCR11/QCR10 and a cleavage product of UQCRFS1). This cytochrome bc1 complex then forms a dimer. Requires heme b as cofactor.

The protein localises to the mitochondrion inner membrane. Component of the ubiquinol-cytochrome c reductase complex (complex III or cytochrome b-c1 complex) that is part of the mitochondrial respiratory chain. The b-c1 complex mediates electron transfer from ubiquinol to cytochrome c. Contributes to the generation of a proton gradient across the mitochondrial membrane that is then used for ATP synthesis. This is Cytochrome b (MT-CYB) from Akodon dayi (Day's grass mouse).